Reading from the N-terminus, the 237-residue chain is Probable transcriptional regulatory protein PSHAa1370 (237 aa).

Belongs to the TACO1 family.

It localises to the cytoplasm. The polypeptide is Probable transcriptional regulatory protein PSHAa1370 (Pseudoalteromonas translucida (strain TAC 125)).